The following is a 33-amino-acid chain: Maurocalcin (33 aa).

3 disulfides stabilise this stretch: C3–C17, C10–C21, and C16–C32. The tract at residues 22–24 (KRR) is essential for stimulation of [3H]ryanodine binding to RYR.

Belongs to the scorpion calcin family. The non-natural D-maurocalcin (a chiral analog of maurocalcin composed of D-amino acids) completely loses the ability to stimulate [3H]ryanodine binding and calcium release. Its protease resistance, combined with its efficient cell penetration at concentrations devoid of cell toxicity, suggests that it should be an excellent vector for in vivo applications. Expressed by the venom gland.

It localises to the secreted. In terms of biological role, this toxin stabilizes ryanodine receptor 1 (RyR1) opening in a long-lasting subconductance state (48%-60% of the full conductance state). Furthermore, it triggers calcium release from sarcoplasmic vesicles (6.6 nM are enough to induce a sharp release, and 60% of the total calcium is released after toxin (100 nM) addition) probably by acting as a cell-penetrating peptide (CPP). In addition, it has been shown to dose-dependently stimulate ryanodine binding to RyR1 (EC(50)=12.5-26.4 nM). It also augments the bell-shaped calcium-[3H]ryanodine binding curve that is maximal at about 10 uM calcium concentration. It binds a different site as ryanodine. It acts synergistically with caffeine. In vivo, intracerebroventricular injection into mice causes death. This Scorpio palmatus (Israeli golden scorpion) protein is Maurocalcin.